Consider the following 140-residue polypeptide: uncharacterized protein (140 aa).

Residue 18–25 coordinates ATP; the sequence is GTNGSGKS.

This is an uncharacterized protein from Haemophilus influenzae (strain ATCC 51907 / DSM 11121 / KW20 / Rd).